The chain runs to 163 residues: Lipoprotein signal peptidase (163 aa).

The next 3 helical transmembrane spans lie at 7 to 27, 64 to 84, and 99 to 119; these read LSFLWLSAVAFVIDLLTKYLV, WQKYFFIALALIISAVLVYLL, and ALIIGGALANMADRAYHGFVV. Residues Asp120 and Asp138 contribute to the active site. The helical transmembrane segment at 133–153 threads the bilayer; sequence VFNVADIAICVGVGLLILDSF.

This sequence belongs to the peptidase A8 family.

Its subcellular location is the cell inner membrane. The enzyme catalyses Release of signal peptides from bacterial membrane prolipoproteins. Hydrolyzes -Xaa-Yaa-Zaa-|-(S,diacylglyceryl)Cys-, in which Xaa is hydrophobic (preferably Leu), and Yaa (Ala or Ser) and Zaa (Gly or Ala) have small, neutral side chains.. The protein operates within protein modification; lipoprotein biosynthesis (signal peptide cleavage). This protein specifically catalyzes the removal of signal peptides from prolipoproteins. This chain is Lipoprotein signal peptidase, found in Actinobacillus succinogenes (strain ATCC 55618 / DSM 22257 / CCUG 43843 / 130Z).